Here is a 457-residue protein sequence, read N- to C-terminus: MGLIAMSERDLQRIEVLSKVIDGRMTMVSAAHVLGLSTRQVRRLLDRISAGGAASIRHKAIGRPSNNRICDGVRDYAMAIVRERYADFGPTLAAEKLAELDGLTVSRETLRQWMADAGLWLSRKQRRTFHQPRLRREAYGELVQIDGSEHRWFEDRGDPCSLLVFIDDATGKLMQLRFVRSESAFTYFEALELYLKAHGAPVAFYSDKHSVFRVAKKDAKGGQGMTQFGRALCELNIEILCANSSQAKGRVERMNRTLQDRLIKDLRLEGICGMDDGNAFLPRFMERYNRQFAITPARSDDLHRPLNLAPDRLRDVLCKREQRYVGAQLTFSFERQRIMLEENEVTRGLVGRYVETHAYADGRLDVRWKGHSLPYRVFDKDQRVTHAAIIENKRLSDVLAYIKERQDERPAPKVRTNSEKNGYTPRGRKPGKRTDFMNDPVVIARRRQALSNLDAAE.

The region spanning 128-313 (TFHQPRLRRE…RPLNLAPDRL (186 aa)) is the Integrase catalytic domain. The segment at 406–440 (QDERPAPKVRTNSEKNGYTPRGRKPGKRTDFMNDP) is disordered.

In Sinorhizobium fredii (strain NBRC 101917 / NGR234), this protein is Putative transposase y4bF.